Here is a 356-residue protein sequence, read N- to C-terminus: MYPTSGCARVLMACPAPAMLRGPLLRPSTTAIRGLRGSPLLYHYAATSNSNMRYFSSTSRRWIKEFFAPPKETDHIVESVTTWKHPVFTEKQMKEIAIAHREAKNWSDWVALGTVRFLRWATDLATGYRHAAPGKQGVEVPEQFQMTERKWVIRFIFLETVAGVPGMVGGMLRHLRSLRRMKRDNGWIETLLEEAYNERMHLLSFLKLAQPGWFMRLMVLGAQGVFFNGFFISYLISPRTCHRFVGYLEEEAVMTYTHAIKDLESGKLPNWANQPAPDIAVAYWQMPEGKRTILDLLYYIRADEAKHREVNHTLANLKQGVDPNPYAAKYDNPEAPHPTKSAEIVKPTGWERDEVI.

The helical transmembrane segment at 152 to 172 threads the bilayer; that stretch reads VIRFIFLETVAGVPGMVGGML. Fe cation-binding residues include Glu159, Glu198, and His201. The chain crosses the membrane as a helical span at residues 217–237; sequence LMVLGAQGVFFNGFFISYLIS. Residues Glu249, Glu304, and His307 each coordinate Fe cation. Residues 330–356 are disordered; sequence YDNPEAPHPTKSAEIVKPTGWERDEVI.

It belongs to the alternative oxidase family. Fe cation serves as cofactor.

It localises to the mitochondrion inner membrane. In terms of biological role, catalyzes cyanide-resistant oxygen consumption. May increase respiration when the cytochrome respiratory pathway is restricted, or in response to low temperatures. The polypeptide is Alternative oxidase, mitochondrial (AOX1) (Ajellomyces capsulatus (Darling's disease fungus)).